The following is a 762-amino-acid chain: 5-methyltetrahydropteroyltriglutamate--homocysteine methyltransferase (762 aa).

Residues R17–K20 and K111 contribute to the 5-methyltetrahydropteroyltri-L-glutamate site. L-homocysteine is bound by residues I435–S437 and E488. L-methionine contacts are provided by residues I435–S437 and E488. 5-methyltetrahydropteroyltri-L-glutamate-binding positions include R519–C520 and W565. Position 603 (D603) interacts with L-homocysteine. Position 603 (D603) interacts with L-methionine. Position 609 (E609) interacts with 5-methyltetrahydropteroyltri-L-glutamate. Positions 645, 647, and 669 each coordinate Zn(2+). The active-site Proton donor is the H698. Residue C730 participates in Zn(2+) binding.

Belongs to the vitamin-B12 independent methionine synthase family. It depends on Zn(2+) as a cofactor.

The catalysed reaction is 5-methyltetrahydropteroyltri-L-glutamate + L-homocysteine = tetrahydropteroyltri-L-glutamate + L-methionine. It functions in the pathway amino-acid biosynthesis; L-methionine biosynthesis via de novo pathway; L-methionine from L-homocysteine (MetE route): step 1/1. Its function is as follows. Catalyzes the transfer of a methyl group from 5-methyltetrahydrofolate to homocysteine resulting in methionine formation. In Bacillus thuringiensis subsp. konkukian (strain 97-27), this protein is 5-methyltetrahydropteroyltriglutamate--homocysteine methyltransferase.